The sequence spans 752 residues: Myb-related protein A (752 aa).

The disordered stretch occupies residues 1-22 (MAKRSRSEDEDDDLQYADHDYE). 3 HTH myb-type domains span residues 30–81 (KKLW…QKVL), 82–137 (NPEL…NPEV), and 138–188 (KKSS…RRKV). 3 consecutive DNA-binding regions (H-T-H motif) follow at residues 58-81 (WTLI…QKVL), 110-133 (WSLI…HNHL), and 161-184 (WAEI…NSTM). Lys-199 participates in a covalent cross-link: Glycyl lysine isopeptide (Lys-Gly) (interchain with G-Cter in SUMO2). Residues 230–295 (IPGYQYVSPE…RIPSQPGSFS (66 aa)) are transcriptional activation domain. The segment at 298–553 (SGSFLMDDNM…IRRSILGTTP (256 aa)) is negative regulatory domain. Lys-394 bears the N6-acetyllysine mark. Residues 451–480 (RKMRVGHSPGSELRDGSLNDGGNMALKHTP) are disordered. Residues Lys-592 and Lys-602 each participate in a glycyl lysine isopeptide (Lys-Gly) (interchain with G-Cter in SUMO2) cross-link.

As to quaternary structure, component of the DREAM complex (also named LINC complex) at least composed of E2F4, E2F5, LIN9, LIN37, LIN52, LIN54, MYBL1, MYBL2, RBL1, RBL2, RBBP4, TFDP1 and TFDP2. The complex exists in quiescent cells where it represses cell cycle-dependent genes. It dissociates in S phase when LIN9, LIN37, LIN52 and LIN54 form a subcomplex that binds to MYBL2. As to expression, expressed in a variety of lymphoid and solid tumor lines cultured in vitro.

Its subcellular location is the nucleus. Its function is as follows. Transcription factor that specifically recognizes the sequence 5'-YAAC[GT]G-3'. Acts as a master regulator of male meiosis by promoting expression of piRNAs: activates expression of both piRNA precursor RNAs and expression of protein-coding genes involved in piRNA metabolism. The piRNA metabolic process mediates the repression of transposable elements during meiosis by forming complexes composed of piRNAs and Piwi proteins and governs the methylation and subsequent repression of transposons, which is essential for the germline integrity. Transcriptional activator of SOX30. The chain is Myb-related protein A (MYBL1) from Homo sapiens (Human).